The chain runs to 204 residues: Large ribosomal subunit protein uL4 (204 aa).

A disordered region spans residues 49–75 (TKGRSEVSGGGKKPWRQKGRGGARAGS).

The protein belongs to the universal ribosomal protein uL4 family. Part of the 50S ribosomal subunit.

In terms of biological role, one of the primary rRNA binding proteins, this protein initially binds near the 5'-end of the 23S rRNA. It is important during the early stages of 50S assembly. It makes multiple contacts with different domains of the 23S rRNA in the assembled 50S subunit and ribosome. Forms part of the polypeptide exit tunnel. This chain is Large ribosomal subunit protein uL4, found in Campylobacter hominis (strain ATCC BAA-381 / DSM 21671 / CCUG 45161 / LMG 19568 / NCTC 13146 / CH001A).